The following is a 66-amino-acid chain: MPKLKTKSGTKKRFKLTASGKVKRGQTGKRHGMIKRTNKQIRNKRGTTIMADADAARVIKNFMPYA.

Belongs to the bacterial ribosomal protein bL35 family.

This chain is Large ribosomal subunit protein bL35, found in Parvibaculum lavamentivorans (strain DS-1 / DSM 13023 / NCIMB 13966).